The chain runs to 308 residues: Methionyl-tRNA formyltransferase (308 aa).

110–113 (SLLP) is a (6S)-5,6,7,8-tetrahydrofolate binding site.

The protein belongs to the Fmt family.

It carries out the reaction L-methionyl-tRNA(fMet) + (6R)-10-formyltetrahydrofolate = N-formyl-L-methionyl-tRNA(fMet) + (6S)-5,6,7,8-tetrahydrofolate + H(+). Attaches a formyl group to the free amino group of methionyl-tRNA(fMet). The formyl group appears to play a dual role in the initiator identity of N-formylmethionyl-tRNA by promoting its recognition by IF2 and preventing the misappropriation of this tRNA by the elongation apparatus. This chain is Methionyl-tRNA formyltransferase, found in Neisseria gonorrhoeae (strain NCCP11945).